Consider the following 170-residue polypeptide: MAKHDIEERGDGLTEKLIGVNRVTKVVKGGRIMAFSALTVVGDGDGGIGMGKGKSKEVPVAVQKAMDQARRSMVKIPLRNGTLQHAVIGKHGATTVFMQPAPEGSGVKAGGAMRQVFDAIGVHNVSAKVHGSTNPYNVVRATLNGLMKINTPADIAAKRGKTVAEILGAE.

The 64-residue stretch at 13–76 folds into the S5 DRBM domain; sequence LTEKLIGVNR…DQARRSMVKI (64 aa).

This sequence belongs to the universal ribosomal protein uS5 family. In terms of assembly, part of the 30S ribosomal subunit. Contacts proteins S4 and S8.

Its function is as follows. With S4 and S12 plays an important role in translational accuracy. In terms of biological role, located at the back of the 30S subunit body where it stabilizes the conformation of the head with respect to the body. This is Small ribosomal subunit protein uS5 from Laribacter hongkongensis (strain HLHK9).